Consider the following 346-residue polypeptide: Calcium uniporter protein, mitochondrial (346 aa).

Residues 1-195 are Mitochondrial matrix-facing; it reads MTKGKLLTTP…ECDKAAHRGA (195 aa). Positions 55 to 120 are disordered; the sequence is ELPPPDPQDS…GEGKDEGEFV (66 aa). Basic and acidic residues-rich tracts occupy residues 76-91 and 109-119; these read MEAK…KADT and REGEGKDEGEF. Residues 196–216 traverse the membrane as a helical segment; it reads QRIALAGCGGLIGYWYIVYRL. Over 217 to 226 the chain is Mitochondrial intermembrane; it reads TFETDLGWDV. Residues 224–232 carry the Selectivity filter motif; it reads WDVMEPVTY. The chain crosses the membrane as a helical span at residues 227 to 248; sequence MEPVTYLVGLSTLIGGYMWFLW. Glu228 is a Ca(2+) binding site. The Mitochondrial matrix portion of the chain corresponds to 249–346; sequence HNREVSYRSA…KEGEEDDEDD (98 aa). Residues 306-346 form a disordered region; sequence WNETQDEGGDEKVTKALRDERKNNNGTKNKSKEGEEDDEDD. Residues 315–328 show a composition bias toward basic and acidic residues; sequence DEKVTKALRDERKN.

The protein belongs to the MCU (TC 1.A.77) family. In terms of assembly, homotetramer, assembles in a dimer or dimers configuration with two interfaces.

It is found in the mitochondrion inner membrane. It carries out the reaction Ca(2+)(in) = Ca(2+)(out). Highly selective calcium channel localized to the inner mitochondrial membrane, which mediates calcium uptake into the mitochondrial matrix. Mitochondrial calcium homeostasis plays key roles in cellular physiology and regulates ATP production, cytoplasmic calcium signals and activation of cell death pathways. Sufficient to operate as a pore-forming channel without the need of calcium-sensor or auxiliary subunit. This Cyphellophora europaea (strain CBS 101466) (Phialophora europaea) protein is Calcium uniporter protein, mitochondrial.